Reading from the N-terminus, the 249-residue chain is NAD(P)H-quinone oxidoreductase subunit K (249 aa).

Residues Cys-65, Cys-66, Cys-130, and Cys-161 each contribute to the [4Fe-4S] cluster site.

The protein belongs to the complex I 20 kDa subunit family. As to quaternary structure, NDH-1 can be composed of about 15 different subunits; different subcomplexes with different compositions have been identified which probably have different functions. Requires [4Fe-4S] cluster as cofactor.

The protein resides in the cellular thylakoid membrane. It carries out the reaction a plastoquinone + NADH + (n+1) H(+)(in) = a plastoquinol + NAD(+) + n H(+)(out). It catalyses the reaction a plastoquinone + NADPH + (n+1) H(+)(in) = a plastoquinol + NADP(+) + n H(+)(out). Its function is as follows. NDH-1 shuttles electrons from an unknown electron donor, via FMN and iron-sulfur (Fe-S) centers, to quinones in the respiratory and/or the photosynthetic chain. The immediate electron acceptor for the enzyme in this species is believed to be plastoquinone. Couples the redox reaction to proton translocation, and thus conserves the redox energy in a proton gradient. Cyanobacterial NDH-1 also plays a role in inorganic carbon-concentration. The sequence is that of NAD(P)H-quinone oxidoreductase subunit K from Prochlorococcus marinus (strain NATL2A).